A 342-amino-acid polypeptide reads, in one-letter code: uncharacterized protein (342 aa).

The N-terminal stretch at 1–18 is a signal peptide; it reads MWKKLMLLLLMAIPLVSA.

This is an uncharacterized protein from Methanocaldococcus jannaschii (strain ATCC 43067 / DSM 2661 / JAL-1 / JCM 10045 / NBRC 100440) (Methanococcus jannaschii).